A 172-amino-acid chain; its full sequence is Large ribosomal subunit protein bL21m (172 aa).

Residues 1 to 20 constitute a mitochondrion transit peptide; that stretch reads MIRNIGSNLMKSSSSILLRN.

It belongs to the bacterial ribosomal protein bL21 family.

It localises to the mitochondrion. The sequence is that of Large ribosomal subunit protein bL21m (mrpl21) from Dictyostelium discoideum (Social amoeba).